The following is a 366-amino-acid chain: Quinolinate synthase (366 aa).

Residues His-44 and Ser-61 each coordinate iminosuccinate. Cys-108 is a [4Fe-4S] cluster binding site. Residues 139 to 141 (YIN) and Ser-160 contribute to the iminosuccinate site. A [4Fe-4S] cluster-binding site is contributed by Cys-228. Residues 254–256 (HPE) and Thr-271 contribute to the iminosuccinate site. Residue Cys-318 coordinates [4Fe-4S] cluster.

The protein belongs to the quinolinate synthase family. Type 3 subfamily. [4Fe-4S] cluster serves as cofactor.

The protein localises to the cytoplasm. The enzyme catalyses iminosuccinate + dihydroxyacetone phosphate = quinolinate + phosphate + 2 H2O + H(+). Its pathway is cofactor biosynthesis; NAD(+) biosynthesis; quinolinate from iminoaspartate: step 1/1. Its function is as follows. Catalyzes the condensation of iminoaspartate with dihydroxyacetone phosphate to form quinolinate. In Listeria monocytogenes serovar 1/2a (strain ATCC BAA-679 / EGD-e), this protein is Quinolinate synthase.